The chain runs to 229 residues: Large ribosomal subunit protein uL1 (229 aa).

Belongs to the universal ribosomal protein uL1 family. In terms of assembly, part of the 50S ribosomal subunit.

In terms of biological role, binds directly to 23S rRNA. The L1 stalk is quite mobile in the ribosome, and is involved in E site tRNA release. Its function is as follows. Protein L1 is also a translational repressor protein, it controls the translation of the L11 operon by binding to its mRNA. The polypeptide is Large ribosomal subunit protein uL1 (Listeria monocytogenes serovar 1/2a (strain ATCC BAA-679 / EGD-e)).